Reading from the N-terminus, the 533-residue chain is Yeast-form wall Protein 1 (533 aa).

Residues Met1–Ala21 form the signal peptide. N-linked (GlcNAc...) asparagine glycosylation is present at Asn115. Disordered regions lie at residues Tyr161–Thr219 and Pro418–Ser451. 2 stretches are compositionally biased toward low complexity: residues Pro163–Ala214 and Pro427–Ser451. The GPI-anchor amidated glycine moiety is linked to residue Gly511. Residues Ala512–Ile533 constitute a propeptide, removed in mature form.

It belongs to the flocculin family. The GPI-anchor is attached to the protein in the endoplasmic reticulum and serves to target the protein to the cell surface. There, the glucosamine-inositol phospholipid moiety is cleaved off and the GPI-modified mannoprotein is covalently attached via its lipidless GPI glycan remnant to the 1,6-beta-glucan of the outer cell wall layer. Post-translationally, cleaved by SAP9 and SAP10, which leads to its release from the cell wall. In terms of processing, N-glycosylated.

The protein localises to the secreted. It is found in the cell wall. It localises to the membrane. In terms of biological role, cell wall protein which plays an anti-adhesive role and promotes dispersal of yeast forms, which allows the organism to seek new sites for colonization. This chain is Yeast-form wall Protein 1 (YWP1), found in Candida albicans (strain SC5314 / ATCC MYA-2876) (Yeast).